The sequence spans 194 residues: CASP-like protein 4D1 (194 aa).

Residues 1-10 (MASRTVLLPS) are Cytoplasmic-facing. Residues 11 to 31 (AVLILRLLSLGLLAASLALIA) traverse the membrane as a helical segment. Over 32-55 (ADKLNVDSDPPQRYTFRDVYAYRY) the chain is Extracellular. Residues 56 to 76 (VLAVAVIGCAYTLLQLPLAAV) traverse the membrane as a helical segment. The Cytoplasmic segment spans residues 77 to 94 (SIIASGNNKRGIGAGGGS). Residues 95–115 (VAVALLVLVLLADVVFALLLA) form a helical membrane-spanning segment. At 116–161 (TGAAAGFAFTYDVKRYLDGQFDDDSIGTPEVDKLHRDMDKFFDLAY) the chain is on the extracellular side. A helical membrane pass occupies residues 162 to 182 (AAAGLMLAAAACMALVIMLSV). Topologically, residues 183–194 (YSLARQVRSDYI) are cytoplasmic.

It belongs to the Casparian strip membrane proteins (CASP) family. Homodimer and heterodimers.

Its subcellular location is the cell membrane. This Sorghum bicolor (Sorghum) protein is CASP-like protein 4D1.